A 361-amino-acid polypeptide reads, in one-letter code: RNA 3'-terminal phosphate cyclase (361 aa).

ATP contacts are provided by residues Q109 and 293–297; that span reads HLADQ. H319 acts as the Tele-AMP-histidine intermediate in catalysis.

This sequence belongs to the RNA 3'-terminal cyclase family. Type 1 subfamily.

It is found in the cytoplasm. The catalysed reaction is a 3'-end 3'-phospho-ribonucleotide-RNA + ATP = a 3'-end 2',3'-cyclophospho-ribonucleotide-RNA + AMP + diphosphate. Catalyzes the conversion of 3'-phosphate to a 2',3'-cyclic phosphodiester at the end of RNA. The mechanism of action of the enzyme occurs in 3 steps: (A) adenylation of the enzyme by ATP; (B) transfer of adenylate to an RNA-N3'P to produce RNA-N3'PP5'A; (C) and attack of the adjacent 2'-hydroxyl on the 3'-phosphorus in the diester linkage to produce the cyclic end product. The biological role of this enzyme is unknown but it is likely to function in some aspects of cellular RNA processing. This is RNA 3'-terminal phosphate cyclase from Methylococcus capsulatus (strain ATCC 33009 / NCIMB 11132 / Bath).